We begin with the raw amino-acid sequence, 187 residues long: Insulin-like growth factor 2 (187 aa).

Residues methionine 1–alanine 23 form the signal peptide. The segment at tyrosine 25–phenylalanine 51 is b. 3 disulfides stabilise this stretch: cysteine 32–cysteine 71, cysteine 44–cysteine 84, and cysteine 70–cysteine 75. The tract at residues serine 52 to arginine 64 is c. The tract at residues arginine 64 to alanine 85 is a. The tract at residues lysine 86–glutamate 91 is d. The propeptide at arginine 92–glutamate 187 is e peptide. Residues histidine 162 to glutamate 187 form a disordered region.

It belongs to the insulin family.

The protein resides in the secreted. Functionally, the insulin-like growth factors, isolated from plasma, are structurally and functionally related to insulin but have a much higher growth-promoting activity. Acts as a ligand for integrin which is required for IGF2 signaling. This Gallus gallus (Chicken) protein is Insulin-like growth factor 2.